The following is a 311-amino-acid chain: Cytosolic Fe-S cluster assembly factor Nubp1 homolog (311 aa).

[4Fe-4S] cluster is bound by residues Cys9, Cys23, Cys26, and Cys32. 63–70 (GKGGVGKS) serves as a coordination point for ATP. Residues Cys241 and Cys244 each coordinate [4Fe-4S] cluster.

It belongs to the Mrp/NBP35 ATP-binding proteins family. NUBP1/NBP35 subfamily. Heterotetramer of 2 Nubp1 and 2 Nubp2 chains. [4Fe-4S] cluster serves as cofactor.

It is found in the cytoplasm. Functionally, component of the cytosolic iron-sulfur (Fe/S) protein assembly (CIA) machinery. Required for maturation of extramitochondrial Fe-S proteins. The Nubp1-Nubp2 heterotetramer forms a Fe-S scaffold complex, mediating the de novo assembly of an Fe-S cluster and its transfer to target apoproteins. This chain is Cytosolic Fe-S cluster assembly factor Nubp1 homolog, found in Drosophila grimshawi (Hawaiian fruit fly).